The primary structure comprises 192 residues: Thymidylate kinase (192 aa).

7–14 serves as a coordination point for ATP; that stretch reads GIDCVGKS.

This sequence belongs to the thymidylate kinase family.

It catalyses the reaction dTMP + ATP = dTDP + ADP. Its function is as follows. Phosphorylation of dTMP to form dTDP in both de novo and salvage pathways of dTTP synthesis. The polypeptide is Thymidylate kinase (tmk) (Campylobacter jejuni subsp. jejuni serotype O:2 (strain ATCC 700819 / NCTC 11168)).